Consider the following 202-residue polypeptide: dITP/XTP pyrophosphatase (202 aa).

9–14 (TGNKGK) contributes to the substrate binding site. Asp-73 serves as the catalytic Proton acceptor. Asp-73 is a binding site for Mg(2+). Substrate-binding positions include Ser-74, 158–161 (FGYD), Lys-181, and 186–187 (HR).

It belongs to the HAM1 NTPase family. Homodimer. Requires Mg(2+) as cofactor.

It catalyses the reaction XTP + H2O = XMP + diphosphate + H(+). The enzyme catalyses dITP + H2O = dIMP + diphosphate + H(+). It carries out the reaction ITP + H2O = IMP + diphosphate + H(+). In terms of biological role, pyrophosphatase that catalyzes the hydrolysis of nucleoside triphosphates to their monophosphate derivatives, with a high preference for the non-canonical purine nucleotides XTP (xanthosine triphosphate), dITP (deoxyinosine triphosphate) and ITP. Seems to function as a house-cleaning enzyme that removes non-canonical purine nucleotides from the nucleotide pool, thus preventing their incorporation into DNA/RNA and avoiding chromosomal lesions. This chain is dITP/XTP pyrophosphatase, found in Lactobacillus acidophilus (strain ATCC 700396 / NCK56 / N2 / NCFM).